A 28-amino-acid polypeptide reads, in one-letter code: trp operon leader peptide (28 aa).

Functionally, this protein is involved in control of the biosynthesis of tryptophan. In Serratia marcescens, this protein is trp operon leader peptide (trpL).